The sequence spans 504 residues: Maturase K (504 aa).

This sequence belongs to the intron maturase 2 family. MatK subfamily.

The protein localises to the plastid. Its subcellular location is the chloroplast. Usually encoded in the trnK tRNA gene intron. Probably assists in splicing its own and other chloroplast group II introns. The chain is Maturase K from Vigna mungo (Black gram).